Consider the following 384-residue polypeptide: SAGA complex subunit Spt3 (384 aa).

This sequence belongs to the SPT3 family. As to quaternary structure, component of the Spt-Ada-Gcn5 acetyltransferase (SAGA) complex consisting of wda/Taf5L, Saf6, Taf9, Taf10b, Taf12, Ada1, Spt3, Spt7, Spt20, Sf3b3, Sf3b5, Nipped-A/Tra1, a histone acetyltransferase (HAT) module made up of Gcn5, Ada2b (Isoform B), Ada3 and Sgf29, and a deubiquitinase (DUB) module made up of not/nonstop, Sgf11 and e(y)2 tethered to SAGA by Atxn7. Taf5 and Taf10, which has partially redundant properties with Taf10b, may also be part of this complex.

The protein localises to the nucleus. Its subcellular location is the chromosome. Its function is as follows. Component of the transcription regulatory complex SAGA, a multiprotein complex that activates transcription by remodeling chromatin and mediating histone acetylation and deubiquitination. The SAGA complex predominantly acetylates histone H3. Required for oogenesis; involved in transcriptional activation. This Drosophila melanogaster (Fruit fly) protein is SAGA complex subunit Spt3.